Here is a 282-residue protein sequence, read N- to C-terminus: Bifunctional protein FolD (282 aa).

Residues 166-168 (GAS) and I232 contribute to the NADP(+) site.

The protein belongs to the tetrahydrofolate dehydrogenase/cyclohydrolase family. Homodimer.

It catalyses the reaction (6R)-5,10-methylene-5,6,7,8-tetrahydrofolate + NADP(+) = (6R)-5,10-methenyltetrahydrofolate + NADPH. It carries out the reaction (6R)-5,10-methenyltetrahydrofolate + H2O = (6R)-10-formyltetrahydrofolate + H(+). It participates in one-carbon metabolism; tetrahydrofolate interconversion. Functionally, catalyzes the oxidation of 5,10-methylenetetrahydrofolate to 5,10-methenyltetrahydrofolate and then the hydrolysis of 5,10-methenyltetrahydrofolate to 10-formyltetrahydrofolate. This is Bifunctional protein FolD from Histophilus somni (strain 129Pt) (Haemophilus somnus).